The sequence spans 375 residues: Succinyl-diaminopimelate desuccinylase (375 aa).

Position 66 (His66) interacts with Zn(2+). Asp68 is a catalytic residue. Asp99 serves as a coordination point for Zn(2+). The active-site Proton acceptor is the Glu133. Positions 134, 162, and 348 each coordinate Zn(2+).

This sequence belongs to the peptidase M20A family. DapE subfamily. In terms of assembly, homodimer. Zn(2+) is required as a cofactor. The cofactor is Co(2+).

It catalyses the reaction N-succinyl-(2S,6S)-2,6-diaminopimelate + H2O = (2S,6S)-2,6-diaminopimelate + succinate. It participates in amino-acid biosynthesis; L-lysine biosynthesis via DAP pathway; LL-2,6-diaminopimelate from (S)-tetrahydrodipicolinate (succinylase route): step 3/3. Its function is as follows. Catalyzes the hydrolysis of N-succinyl-L,L-diaminopimelic acid (SDAP), forming succinate and LL-2,6-diaminopimelate (DAP), an intermediate involved in the bacterial biosynthesis of lysine and meso-diaminopimelic acid, an essential component of bacterial cell walls. The chain is Succinyl-diaminopimelate desuccinylase from Herminiimonas arsenicoxydans.